Reading from the N-terminus, the 296-residue chain is 4-hydroxy-tetrahydrodipicolinate synthase (296 aa).

Thr-49 is a binding site for pyruvate. The Proton donor/acceptor role is filled by Tyr-137. Lys-166 functions as the Schiff-base intermediate with substrate in the catalytic mechanism. Pyruvate is bound at residue Ile-208.

The protein belongs to the DapA family. As to quaternary structure, homotetramer; dimer of dimers.

Its subcellular location is the cytoplasm. The enzyme catalyses L-aspartate 4-semialdehyde + pyruvate = (2S,4S)-4-hydroxy-2,3,4,5-tetrahydrodipicolinate + H2O + H(+). It participates in amino-acid biosynthesis; L-lysine biosynthesis via DAP pathway; (S)-tetrahydrodipicolinate from L-aspartate: step 3/4. Catalyzes the condensation of (S)-aspartate-beta-semialdehyde [(S)-ASA] and pyruvate to 4-hydroxy-tetrahydrodipicolinate (HTPA). This is 4-hydroxy-tetrahydrodipicolinate synthase from Azobacteroides pseudotrichonymphae genomovar. CFP2.